The primary structure comprises 98 residues: Cell division protein FtsB (98 aa).

At Met-1–Arg-3 the chain is on the cytoplasmic side. A helical membrane pass occupies residues Leu-4–Leu-21. Over Gly-22–Asn-98 the chain is Periplasmic. Positions His-31–Glu-74 form a coiled coil.

The protein belongs to the FtsB family. Part of a complex composed of FtsB, FtsL and FtsQ.

The protein localises to the cell inner membrane. Essential cell division protein. May link together the upstream cell division proteins, which are predominantly cytoplasmic, with the downstream cell division proteins, which are predominantly periplasmic. This chain is Cell division protein FtsB, found in Shewanella pealeana (strain ATCC 700345 / ANG-SQ1).